A 257-amino-acid polypeptide reads, in one-letter code: 3-deoxy-manno-octulosonate cytidylyltransferase (257 aa).

This sequence belongs to the KdsB family.

The protein localises to the cytoplasm. It catalyses the reaction 3-deoxy-alpha-D-manno-oct-2-ulosonate + CTP = CMP-3-deoxy-beta-D-manno-octulosonate + diphosphate. It participates in nucleotide-sugar biosynthesis; CMP-3-deoxy-D-manno-octulosonate biosynthesis; CMP-3-deoxy-D-manno-octulosonate from 3-deoxy-D-manno-octulosonate and CTP: step 1/1. Its pathway is bacterial outer membrane biogenesis; lipopolysaccharide biosynthesis. Its function is as follows. Activates KDO (a required 8-carbon sugar) for incorporation into bacterial lipopolysaccharide in Gram-negative bacteria. This chain is 3-deoxy-manno-octulosonate cytidylyltransferase, found in Albidiferax ferrireducens (strain ATCC BAA-621 / DSM 15236 / T118) (Rhodoferax ferrireducens).